A 364-amino-acid chain; its full sequence is Aminomethyltransferase (364 aa).

It belongs to the GcvT family. The glycine cleavage system is composed of four proteins: P, T, L and H.

It carries out the reaction N(6)-[(R)-S(8)-aminomethyldihydrolipoyl]-L-lysyl-[protein] + (6S)-5,6,7,8-tetrahydrofolate = N(6)-[(R)-dihydrolipoyl]-L-lysyl-[protein] + (6R)-5,10-methylene-5,6,7,8-tetrahydrofolate + NH4(+). In terms of biological role, the glycine cleavage system catalyzes the degradation of glycine. In Shigella flexneri, this protein is Aminomethyltransferase.